The following is a 443-amino-acid chain: Glutamate-1-semialdehyde 2,1-aminomutase (443 aa).

An N6-(pyridoxal phosphate)lysine modification is found at Lys277.

This sequence belongs to the class-III pyridoxal-phosphate-dependent aminotransferase family. HemL subfamily. Homodimer. It depends on pyridoxal 5'-phosphate as a cofactor.

The protein resides in the cytoplasm. The catalysed reaction is (S)-4-amino-5-oxopentanoate = 5-aminolevulinate. Its pathway is porphyrin-containing compound metabolism; protoporphyrin-IX biosynthesis; 5-aminolevulinate from L-glutamyl-tRNA(Glu): step 2/2. The chain is Glutamate-1-semialdehyde 2,1-aminomutase from Pseudarthrobacter chlorophenolicus (strain ATCC 700700 / DSM 12829 / CIP 107037 / JCM 12360 / KCTC 9906 / NCIMB 13794 / A6) (Arthrobacter chlorophenolicus).